A 383-amino-acid chain; its full sequence is BRISC and BRCA1-A complex member 2 (383 aa).

M1 carries the N-acetylmethionine modification. Residue S2 is modified to Phosphoserine. UEV-like regions lie at residues D30–E147 and I275–A364.

It belongs to the BABAM2 family. As to quaternary structure, component of the ARISC complex, at least composed of UIMC1/RAP80, ABRAXAS1, BRCC3/BRCC36, BABAM2 and BABAM1/NBA1. Component of the BRCA1-A complex, at least composed of BRCA1, BARD1, UIMC1/RAP80, ABRAXAS1, BRCC3/BRCC36, BABAM2 and BABAM1/NBA1. In the BRCA1-A complex, interacts directly with ABRAXAS1, BRCC3/BRCC36 and BABAM1/NBA1. Binds polyubiquitin. Component of the BRISC complex, at least composed of ABRAXAS2, BRCC3/BRCC36, BABAM2 and BABAM1/NBA1. Identified in a complex with SHMT2 and the other subunits of the BRISC complex. Component of the BRCA1/BRCA2 containing complex (BRCC), which also contains BRCA1, BRCA2, BARD1, BRCC3/BRCC36 and RAD51. BRCC is a ubiquitin E3 ligase complex that enhances cellular survival following DNA damage. May interact with FAS and TNFRSF1A.

Its subcellular location is the cytoplasm. The protein resides in the nucleus. Functionally, component of the BRCA1-A complex, a complex that specifically recognizes 'Lys-63'-linked ubiquitinated histones H2A and H2AX at DNA lesions sites, leading to target the BRCA1-BARD1 heterodimer to sites of DNA damage at double-strand breaks (DSBs). The BRCA1-A complex also possesses deubiquitinase activity that specifically removes 'Lys-63'-linked ubiquitin on histones H2A and H2AX. In the BRCA1-A complex, it acts as an adapter that bridges the interaction between BABAM1/NBA1 and the rest of the complex, thereby being required for the complex integrity and modulating the E3 ubiquitin ligase activity of the BRCA1-BARD1 heterodimer. Component of the BRISC complex, a multiprotein complex that specifically cleaves 'Lys-63'-linked ubiquitin in various substrates. Within the BRISC complex, acts as an adapter that bridges the interaction between BABAM1/NBA1 and the rest of the complex, thereby being required for the complex integrity. The BRISC complex is required for normal mitotic spindle assembly and microtubule attachment to kinetochores via its role in deubiquitinating NUMA1. The BRISC complex plays a role in interferon signaling via its role in the deubiquitination of the interferon receptor IFNAR1; deubiquitination increases IFNAR1 activity by enhancing its stability and cell surface expression. Down-regulates the response to bacterial lipopolysaccharide (LPS) via its role in IFNAR1 deubiquitination. May play a role in homeostasis or cellular differentiation in cells of neural, epithelial and germline origins. May also act as a death receptor-associated anti-apoptotic protein, which inhibits the mitochondrial apoptotic pathway. May regulate TNF-alpha signaling through its interactions with TNFRSF1A; however these effects may be indirect. The chain is BRISC and BRCA1-A complex member 2 from Rattus norvegicus (Rat).